Here is a 260-residue protein sequence, read N- to C-terminus: 4-hydroxy-tetrahydrodipicolinate reductase (260 aa).

Residues G12 to M17, G92 to T94, and A118 to F121 each bind NAD(+). The active-site Proton donor/acceptor is the H148. H149 contacts (S)-2,3,4,5-tetrahydrodipicolinate. K152 functions as the Proton donor in the catalytic mechanism. G158–T159 serves as a coordination point for (S)-2,3,4,5-tetrahydrodipicolinate.

The protein belongs to the DapB family.

Its subcellular location is the cytoplasm. It catalyses the reaction (S)-2,3,4,5-tetrahydrodipicolinate + NAD(+) + H2O = (2S,4S)-4-hydroxy-2,3,4,5-tetrahydrodipicolinate + NADH + H(+). The catalysed reaction is (S)-2,3,4,5-tetrahydrodipicolinate + NADP(+) + H2O = (2S,4S)-4-hydroxy-2,3,4,5-tetrahydrodipicolinate + NADPH + H(+). Its pathway is amino-acid biosynthesis; L-lysine biosynthesis via DAP pathway; (S)-tetrahydrodipicolinate from L-aspartate: step 4/4. Functionally, catalyzes the conversion of 4-hydroxy-tetrahydrodipicolinate (HTPA) to tetrahydrodipicolinate. This Lactococcus lactis subsp. cremoris (strain SK11) protein is 4-hydroxy-tetrahydrodipicolinate reductase.